A 402-amino-acid polypeptide reads, in one-letter code: Choline dehydrogenase (402 aa).

This sequence belongs to the iron-containing alcohol dehydrogenase family.

It catalyses the reaction choline + NAD(+) = betaine aldehyde + NADH + H(+). The protein operates within amine and polyamine biosynthesis; betaine biosynthesis via choline pathway; betaine aldehyde from choline (dehydrogenase route): step 1/1. Its function is as follows. Involved in the biosynthesis of the osmoprotectant glycine betaine from choline. The protein is Choline dehydrogenase of Bacillus subtilis (strain 168).